The sequence spans 249 residues: MELKIDTHSHTYASGHAYSTLIENARSAKENGLAMFCTTDHAESMPGAPHYWFFANQRVLPRFLEGVAILRGVEANILNTEGEIDLPLSVDPNLDWAIASFHEPVFAPSNKEAHTQALLNVIQGGRIDALGHLGNPHFDFDFHAVLHCAKDHNVAIEINNSTLKGHSRVGSVERCYEIARVGKALGVYFTTGSDAHFCQDVGKLDLASELLDSVGIDSHRVITHSPSQFLDFLELRGRGPIDELASLRQ.

9 residues coordinate Zn(2+): H8, H10, H16, H41, E74, H102, H132, D194, and H196.

The protein belongs to the PHP family. The cofactor is Zn(2+).

This chain is Probable phosphatase VV2_1469, found in Vibrio vulnificus (strain CMCP6).